Here is a 326-residue protein sequence, read N- to C-terminus: 4-hydroxy-3-methylbut-2-enyl diphosphate reductase 1 (326 aa).

Cys-27 contacts [4Fe-4S] cluster. The (2E)-4-hydroxy-3-methylbut-2-enyl diphosphate site is built by His-56 and His-89. Dimethylallyl diphosphate contacts are provided by His-56 and His-89. Isopentenyl diphosphate contacts are provided by His-56 and His-89. [4Fe-4S] cluster is bound at residue Cys-111. Position 139 (His-139) interacts with (2E)-4-hydroxy-3-methylbut-2-enyl diphosphate. Dimethylallyl diphosphate is bound at residue His-139. His-139 lines the isopentenyl diphosphate pocket. Catalysis depends on Glu-141, which acts as the Proton donor. Thr-179 lines the (2E)-4-hydroxy-3-methylbut-2-enyl diphosphate pocket. Cys-209 provides a ligand contact to [4Fe-4S] cluster. The (2E)-4-hydroxy-3-methylbut-2-enyl diphosphate site is built by Ser-237, Ser-238, Asn-239, and Ser-281. Residues Ser-237, Ser-238, Asn-239, and Ser-281 each coordinate dimethylallyl diphosphate. Ser-237, Ser-238, Asn-239, and Ser-281 together coordinate isopentenyl diphosphate.

The protein belongs to the IspH family. The cofactor is [4Fe-4S] cluster.

It carries out the reaction isopentenyl diphosphate + 2 oxidized [2Fe-2S]-[ferredoxin] + H2O = (2E)-4-hydroxy-3-methylbut-2-enyl diphosphate + 2 reduced [2Fe-2S]-[ferredoxin] + 2 H(+). It catalyses the reaction dimethylallyl diphosphate + 2 oxidized [2Fe-2S]-[ferredoxin] + H2O = (2E)-4-hydroxy-3-methylbut-2-enyl diphosphate + 2 reduced [2Fe-2S]-[ferredoxin] + 2 H(+). It functions in the pathway isoprenoid biosynthesis; dimethylallyl diphosphate biosynthesis; dimethylallyl diphosphate from (2E)-4-hydroxy-3-methylbutenyl diphosphate: step 1/1. Its pathway is isoprenoid biosynthesis; isopentenyl diphosphate biosynthesis via DXP pathway; isopentenyl diphosphate from 1-deoxy-D-xylulose 5-phosphate: step 6/6. Its function is as follows. Catalyzes the conversion of 1-hydroxy-2-methyl-2-(E)-butenyl 4-diphosphate (HMBPP) into a mixture of isopentenyl diphosphate (IPP) and dimethylallyl diphosphate (DMAPP). Acts in the terminal step of the DOXP/MEP pathway for isoprenoid precursor biosynthesis. This is 4-hydroxy-3-methylbut-2-enyl diphosphate reductase 1 from Burkholderia pseudomallei (strain K96243).